A 166-amino-acid chain; its full sequence is Small ribosomal subunit protein uS5 (166 aa).

The S5 DRBM domain occupies 11-74; the sequence is LVEKLVAVDR…EAARRNMITV (64 aa).

It belongs to the universal ribosomal protein uS5 family. In terms of assembly, part of the 30S ribosomal subunit. Contacts proteins S4 and S8.

Its function is as follows. With S4 and S12 plays an important role in translational accuracy. Located at the back of the 30S subunit body where it stabilizes the conformation of the head with respect to the body. The sequence is that of Small ribosomal subunit protein uS5 from Acinetobacter baumannii (strain ATCC 17978 / DSM 105126 / CIP 53.77 / LMG 1025 / NCDC KC755 / 5377).